Here is a 393-residue protein sequence, read N- to C-terminus: NAD(P)H-quinone oxidoreductase subunit H, chloroplastic (393 aa).

Belongs to the complex I 49 kDa subunit family. NDH is composed of at least 16 different subunits, 5 of which are encoded in the nucleus.

The protein localises to the plastid. It localises to the chloroplast thylakoid membrane. It catalyses the reaction a plastoquinone + NADH + (n+1) H(+)(in) = a plastoquinol + NAD(+) + n H(+)(out). The enzyme catalyses a plastoquinone + NADPH + (n+1) H(+)(in) = a plastoquinol + NADP(+) + n H(+)(out). In terms of biological role, NDH shuttles electrons from NAD(P)H:plastoquinone, via FMN and iron-sulfur (Fe-S) centers, to quinones in the photosynthetic chain and possibly in a chloroplast respiratory chain. The immediate electron acceptor for the enzyme in this species is believed to be plastoquinone. Couples the redox reaction to proton translocation, and thus conserves the redox energy in a proton gradient. The polypeptide is NAD(P)H-quinone oxidoreductase subunit H, chloroplastic (Anthoceros angustus (Hornwort)).